A 217-amino-acid polypeptide reads, in one-letter code: MRVRNRKGAGEMLAENAHIVVENPADFKGSWSERFGNDHPIHIEVGCGKGAFITGMAALHPEINYIAIDMQLSVLSYALDKAIEADLPNVQMMLVDGAALSEYFADGEIDQVYLNFSDPWPKGRHEKRRLTYKSFLATYEKILRPEGEIHFKTDNRGLFEYSLVSLANYGMELKKVWLDLHQDEEFAPQNVMTEYEQKFSQKGQVIYRLEAKFLPKK.

Residues E44, D69, D96, and D118 each coordinate S-adenosyl-L-methionine. The active site involves D118. K122 contacts substrate. Positions 124–129 (RHEKRR) are interaction with RNA. Substrate contacts are provided by residues D154 and 193–196 (TEYE).

It belongs to the class I-like SAM-binding methyltransferase superfamily. TrmB family.

It catalyses the reaction guanosine(46) in tRNA + S-adenosyl-L-methionine = N(7)-methylguanosine(46) in tRNA + S-adenosyl-L-homocysteine. The protein operates within tRNA modification; N(7)-methylguanine-tRNA biosynthesis. Its function is as follows. Catalyzes the formation of N(7)-methylguanine at position 46 (m7G46) in tRNA. The polypeptide is tRNA (guanine-N(7)-)-methyltransferase (Lactococcus lactis subsp. cremoris (strain SK11)).